A 303-amino-acid polypeptide reads, in one-letter code: MTGIFAEQTVEVVKSAIETADGALDLYNKYLDQVIPWKTFDETIKELSRFKQEYSQEASVLVGDIKVLLMDSQDKYFEATQTVYEWCGVVTQLLSAYILLFDEYNEKKASAQKDILIRILDDGVKKLNEAQKSLLTSSQSFNNASGKLLALDSQLTNDFSEKSSYFQSQVDRIRKEAYAGAAAGIVAGPFGLIISYSIAAGVIEGKLIPELNNRLKTVQNFFTSLSATVKQANKDIDAAKLKLATEIAAIGEIKTETETTRFYVDYDDLMLSLLKGAAKKMINTCNEYQQRHGKKTLFEVPDV.

A disulfide bond links cysteine 87 and cysteine 285. Residues 179–199 form a helical membrane-spanning segment; it reads AGAAAGIVAGPFGLIISYSIA.

Belongs to the hemolysin E family. Monomer and oligomer. In periplasm, it is present as a monomer, while in outer membrane vesicles, it oligomerizes to form a pore structure that is active. The pore is formed by a dodecamer. Post-translationally, in periplasm, it forms a disulfide bond, which prevents the oligomerization. In outer membrane vesicles, the redox status prevents formation of the disulfide bond, leading to oligomerization and pore formation.

Its subcellular location is the secreted. It is found in the periplasm. The protein resides in the host cell membrane. In terms of biological role, toxin, which has some hemolytic activity towards mammalian cells. Acts by forming a pore-like structure upon contact with mammalian cells. In Salmonella typhi, this protein is Hemolysin E (hlyE).